Reading from the N-terminus, the 194-residue chain is uncharacterized protein (194 aa).

2 disordered regions span residues 52-71 (KGRTTQSAINSENSDKEKYK) and 86-194 (AEAL…DGGS). Composition is skewed to polar residues over residues 53–63 (GRTTQSAINSE), 98–111 (ALTSSKAANRSSTN), and 119–132 (IAHSTSRSRSTSPA). The span at 133 to 169 (NRHRRKEKERTRSNHRHGSHRRHEPYRTHLSRHHRHS) shows a compositional bias: basic residues. Residues 175-194 (SKRDDRYERRREHSPNDGGS) are compositionally biased toward basic and acidic residues.

This is an uncharacterized protein from Schizosaccharomyces pombe (strain 972 / ATCC 24843) (Fission yeast).